A 466-amino-acid polypeptide reads, in one-letter code: Soluble pyridine nucleotide transhydrogenase (466 aa).

36–45 (ERYQNVGGGC) is a binding site for FAD.

It belongs to the class-I pyridine nucleotide-disulfide oxidoreductase family. Requires FAD as cofactor.

It localises to the cytoplasm. The catalysed reaction is NAD(+) + NADPH = NADH + NADP(+). Conversion of NADPH, generated by peripheral catabolic pathways, to NADH, which can enter the respiratory chain for energy generation. The protein is Soluble pyridine nucleotide transhydrogenase of Shigella boydii serotype 18 (strain CDC 3083-94 / BS512).